The following is a 184-amino-acid chain: MSRVGNKAIEVPNAVKVDIKDRNFISVEGPKGKLEYQFNHRLIITNENKVITVKRPNDEIFMKKIHGTTRALLSNMVEGVSKGFQKTLKIVGLAYRAQIKGKQLILSLGFSHPVSVAIPDNLEVVVNQNTEIVIKGIDKQLVGEFAAKNVKLRKPEPYKGKGIRYVGQYVRQKAGKSAKKTRKD.

Belongs to the universal ribosomal protein uL6 family. In terms of assembly, part of the 50S ribosomal subunit.

Its function is as follows. This protein binds to the 23S rRNA, and is important in its secondary structure. It is located near the subunit interface in the base of the L7/L12 stalk, and near the tRNA binding site of the peptidyltransferase center. The protein is Large ribosomal subunit protein uL6 of Aster yellows witches'-broom phytoplasma (strain AYWB).